We begin with the raw amino-acid sequence, 502 residues long: Calnexin homolog (502 aa).

An N-terminal signal peptide occupies residues 1 to 19 (MKFSAYLWWLFLNLALVKG). Topologically, residues 20–481 (TSLLSNVTLA…IDRILEQPLK (462 aa)) are lumenal. N25 and N104 each carry an N-linked (GlcNAc...) asparagine glycan. Residues C125 and C161 are joined by a disulfide bond. An alpha-D-glucoside-binding residues include K131 and D159. The segment at 248-381 (IPDVSVAKPH…PEIENPLYYE (134 aa)) is p domain (Extended arm). Tandem repeats lie at residues 250–261 (DVSVAKPHDWDD), 267–278 (DPEAVKLSDRDE), 286–297 (HPDGTEPPEWNS), 305–316 (DPNAQKPSWWKE), and 320–330 (GEWIPPMIKNP). 4 X approximate repeats stretches follow at residues 250 to 316 (DVSV…WWKE) and 320 to 377 (GEWI…IENP). A glycan (N-linked (GlcNAc...) asparagine) is linked at N296. C332 and C338 form a disulfide bridge. 3 consecutive repeat copies span residues 339–349 (GQQIPGLINNA), 353–363 (GPGELNEIINP), and 367–377 (GEWHPPEIENP). E398 lines the an alpha-D-glucoside pocket. 2 N-linked (GlcNAc...) asparagine glycosylation sites follow: N416 and N425. A helical transmembrane segment spans residues 482-502 (FVLTAAVVLLTTSVLCCVVFT).

It belongs to the calreticulin family. In terms of assembly, interacts with MPD1.

It localises to the endoplasmic reticulum membrane. Its function is as follows. Interacts with newly synthesized monoglucosylated glycoproteins in the endoplasmic reticulum. It may act in assisting protein assembly and/or in the retention within the ER of unassembled protein subunits. It seems to play a major role in the quality control apparatus of the ER by the retention of incorrectly folded proteins. The chain is Calnexin homolog (CNE1) from Saccharomyces cerevisiae (strain ATCC 204508 / S288c) (Baker's yeast).